Here is a 368-residue protein sequence, read N- to C-terminus: Serine/threonine-protein phosphatase PP2A-like PPG1 (368 aa).

Mn(2+)-binding residues include aspartate 50, histidine 52, aspartate 78, and asparagine 110. Catalysis depends on histidine 111, which acts as the Proton donor. Histidine 161 and histidine 247 together coordinate Mn(2+).

This sequence belongs to the PPP phosphatase family. PP-2A subfamily. Inactivated in a complex with phosphatase methylesterase PPE1 (PP2Ai). Interacts with phosphatase 2A activator RRD1, which can reactivate PP2Ai by dissociating the catalytic subunit from the complex. Interacts with TAP42. It depends on Mn(2+) as a cofactor. In terms of processing, reversibly methyl esterified on Leu-368 by leucine carboxyl methyltransferase 1 (PPM1) and protein phosphatase methylesterase 1 (PPE1). Carboxyl methylation influences the affinity of the catalytic subunit for the different regulatory subunits, thereby modulating the PP2A holoenzyme's substrate specificity, enzyme activity and cellular localization.

The catalysed reaction is O-phospho-L-seryl-[protein] + H2O = L-seryl-[protein] + phosphate. It carries out the reaction O-phospho-L-threonyl-[protein] + H2O = L-threonyl-[protein] + phosphate. In terms of biological role, involved in glycogen accumulation. The polypeptide is Serine/threonine-protein phosphatase PP2A-like PPG1 (PPG1) (Saccharomyces cerevisiae (strain ATCC 204508 / S288c) (Baker's yeast)).